A 358-amino-acid chain; its full sequence is G-protein coupled receptor 87 (358 aa).

The Extracellular portion of the chain corresponds to Met1–Val47. 3 N-linked (GlcNAc...) asparagine glycosylation sites follow: Asn4, Asn24, and Asn33. The helical transmembrane segment at Leu48–Phe68 threads the bilayer. At His69–Ser75 the chain is on the cytoplasmic side. Residues Phe76–Phe96 form a helical membrane-spanning segment. The Extracellular portion of the chain corresponds to Arg97–Tyr116. An intrachain disulfide couples Cys114 to Cys192. A helical membrane pass occupies residues Thr117–Val137. Residues Asp138 to Lys159 lie on the Cytoplasmic side of the membrane. The chain crosses the membrane as a helical span at residues Val160–Thr180. At Asn181 to Thr208 the chain is on the extracellular side. A helical membrane pass occupies residues Tyr209–Ile229. Topologically, residues Ser230 to Val256 are cytoplasmic. Residues Val257–Phe277 traverse the membrane as a helical segment. The Extracellular segment spans residues Ser278–Glu297. The chain crosses the membrane as a helical span at residues Met298–Cys318. The Cytoplasmic segment spans residues Lys319–Val358.

Belongs to the G-protein coupled receptor 1 family. In terms of tissue distribution, expressed at high levels in testis and brain and to a lesser extent placenta, ovary, prostate, and skeletal muscle but not in heart, lung, kidney, liver or intestine.

It localises to the cell membrane. Receptor for lysophosphatidic acid (LPA). Necessary for p53/TP53-dependent survival in response to DNA damage. Promotes the Hippo-YAP signaling pathway and thereby modulates glycolysis and oxidative stress production by the regulation of hexokinase-2/HK2. The chain is G-protein coupled receptor 87 (Gpr87) from Mus musculus (Mouse).